The sequence spans 1019 residues: Vacuolar membrane protease (1019 aa).

Over 1–69 the chain is Cytoplasmic; the sequence is MFLEINFYST…DRIPTVVGFR (69 aa). A helical membrane pass occupies residues 70-90; the sequence is VIPTTVLVLLTYLTIFTLVIV. Residues 91 to 404 are Vacuolar-facing; sequence TDWLPEPPKN…AELVIFYLND (314 aa). An N-linked (GlcNAc...) asparagine glycan is attached at Asn-158. Residues His-195 and Asp-207 each contribute to the Zn(2+) site. Glu-239 functions as the Proton acceptor in the catalytic mechanism. Glu-240 is a Zn(2+) binding site. N-linked (GlcNAc...) asparagine glycosylation occurs at Asn-256. Residues Glu-265 and His-341 each coordinate Zn(2+). Residues 405–425 form a helical membrane-spanning segment; it reads LLIYNVVSLVVGPISLIFFVV. At 426 to 466 the chain is on the cytoplasmic side; it reads CEYVLRNERARQPNGHPVSRPSVLEWLKQRSWLRALWRRSK. Residues 467 to 487 form a helical membrane-spanning segment; sequence FWIALVITIALQALLVWGYLA. The Vacuolar portion of the chain corresponds to 488–497; sequence FNSFTVYSSP. A helical membrane pass occupies residues 498-518; the sequence is YLVLISFFSLAYLSLVIPLTF. The Cytoplasmic segment spans residues 519 to 539; that stretch reads TFNQTQSPTAKYIAPEREKHT. A helical transmembrane segment spans residues 540-560; sequence LLIQVYIFTWILLLFSTIAVA. At 561 to 565 the chain is on the vacuolar side; sequence RAQVG. A helical transmembrane segment spans residues 566 to 586; the sequence is GLYFVTAWNTGVWIACLLAAV. The Cytoplasmic segment spans residues 587 to 651; that stretch reads EGMMLPVPQG…ASLRKPQEGG (65 aa). The segment at 603-634 is disordered; it reads HSAHHHHHHEHEEDQDADDDDREQRQPPTEAT. A helical transmembrane segment spans residues 652–672; that stretch reads VVGWWIVHLLLTIPAPVLLIA. At 673–692 the chain is on the vacuolar side; sequence QMGSLLLDSLPQTLADGSPA. Residues 693–713 form a helical membrane-spanning segment; that stretch reads YVVYAAASLTAVLLAVPLTPF. Residues 714 to 719 lie on the Cytoplasmic side of the membrane; that stretch reads SGKLHR. The helical transmembrane segment at 720–740 threads the bilayer; sequence GLFFLFFLSFLIVTAYLWLAF. The Vacuolar portion of the chain corresponds to 741-1019; the sequence is PFSSADPLKV…LVEAWSPFSV (279 aa). Asn-774 is a glycosylation site (N-linked (GlcNAc...) asparagine).

It belongs to the peptidase M28 family. Zn(2+) serves as cofactor.

The protein resides in the vacuole membrane. In terms of biological role, may be involved in vacuolar sorting and osmoregulation. The chain is Vacuolar membrane protease from Laccaria bicolor (strain S238N-H82 / ATCC MYA-4686) (Bicoloured deceiver).